We begin with the raw amino-acid sequence, 521 residues long: Bifunctional purine biosynthesis protein PurH (521 aa).

Positions 1–145 (MIKQALISVS…KNHRDVTVVV (145 aa)) constitute an MGS-like domain.

Belongs to the PurH family.

The catalysed reaction is (6R)-10-formyltetrahydrofolate + 5-amino-1-(5-phospho-beta-D-ribosyl)imidazole-4-carboxamide = 5-formamido-1-(5-phospho-D-ribosyl)imidazole-4-carboxamide + (6S)-5,6,7,8-tetrahydrofolate. It carries out the reaction IMP + H2O = 5-formamido-1-(5-phospho-D-ribosyl)imidazole-4-carboxamide. It functions in the pathway purine metabolism; IMP biosynthesis via de novo pathway; 5-formamido-1-(5-phospho-D-ribosyl)imidazole-4-carboxamide from 5-amino-1-(5-phospho-D-ribosyl)imidazole-4-carboxamide (10-formyl THF route): step 1/1. Its pathway is purine metabolism; IMP biosynthesis via de novo pathway; IMP from 5-formamido-1-(5-phospho-D-ribosyl)imidazole-4-carboxamide: step 1/1. The sequence is that of Bifunctional purine biosynthesis protein PurH from Burkholderia lata (strain ATCC 17760 / DSM 23089 / LMG 22485 / NCIMB 9086 / R18194 / 383).